A 288-amino-acid chain; its full sequence is uncharacterized protein (288 aa).

Residues 1–59 form the HTH lysR-type domain; the sequence is MDKLNAISIFCKVIETQSFTLAAKQQNISVAMASKLVSQLEEHLKTRLLQRTTRKIMPT. Residues 19–38 constitute a DNA-binding region (H-T-H motif); sequence FTLAAKQQNISVAMASKLVS.

Belongs to the LysR transcriptional regulatory family.

This is an uncharacterized protein from Haemophilus influenzae (strain ATCC 51907 / DSM 11121 / KW20 / Rd).